The chain runs to 341 residues: Phenylalanine--tRNA ligase alpha subunit (341 aa).

Glu254 contributes to the Mg(2+) binding site.

The protein belongs to the class-II aminoacyl-tRNA synthetase family. Phe-tRNA synthetase alpha subunit type 1 subfamily. As to quaternary structure, tetramer of two alpha and two beta subunits. It depends on Mg(2+) as a cofactor.

It is found in the cytoplasm. It carries out the reaction tRNA(Phe) + L-phenylalanine + ATP = L-phenylalanyl-tRNA(Phe) + AMP + diphosphate + H(+). This chain is Phenylalanine--tRNA ligase alpha subunit, found in Chlorobaculum parvum (strain DSM 263 / NCIMB 8327) (Chlorobium vibrioforme subsp. thiosulfatophilum).